Reading from the N-terminus, the 212-residue chain is N-(5'-phosphoribosyl)anthranilate isomerase (212 aa).

Belongs to the TrpF family.

The enzyme catalyses N-(5-phospho-beta-D-ribosyl)anthranilate = 1-(2-carboxyphenylamino)-1-deoxy-D-ribulose 5-phosphate. Its pathway is amino-acid biosynthesis; L-tryptophan biosynthesis; L-tryptophan from chorismate: step 3/5. This Roseiflexus castenholzii (strain DSM 13941 / HLO8) protein is N-(5'-phosphoribosyl)anthranilate isomerase.